We begin with the raw amino-acid sequence, 1013 residues long: Poly [ADP-ribose] polymerase 1 (1013 aa).

The residue at position 2 (A2) is an N-acetylalanine. A PARP-type 1 zinc finger spans residues 9-93; it reads YRVEYAKSGR…KVKKTAEAGG (85 aa). Residues C21 and C24 each coordinate Zn(2+). The residue at position 41 (S41) is a Phosphoserine. Zn(2+)-binding residues include H53 and C56. Residues K97 and K105 each carry the N6-acetyllysine modification. The segment at 113 to 203 adopts a PARP-type 2 zinc-finger fold; the sequence is FAAEYAKSNR…VLKKQLPGVK (91 aa). Residues C125 and C128 each contribute to the Zn(2+) site. The residue at position 131 (K131) is an N6-acetyllysine. Residues H159 and C162 each contribute to the Zn(2+) site. Phosphoserine occurs at positions 177, 179, and 185. Residue K192 forms a Glycyl lysine isopeptide (Lys-Gly) (interchain with G-Cter in SUMO2) linkage. The disordered stretch occupies residues 198–233; sequence QLPGVKSEGKRKGDEVDGADEVAKKKSKKGKDKDSK. K203 participates in a covalent cross-link: Glycyl lysine isopeptide (Lys-Gly) (interchain with G-Cter in SUMO1); alternate. A Glycyl lysine isopeptide (Lys-Gly) (interchain with G-Cter in SUMO2); alternate cross-link involves residue K203. 2 consecutive short sequence motifs (nuclear localization signal) follow at residues 207-209 and 221-226; these read KRK and KKKSKK. The PADR1 zinc-binding domain maps to 225-359; sequence KKGKDKDSKL…VKKQDRIFPP (135 aa). K249 is covalently cross-linked (Glycyl lysine isopeptide (Lys-Gly) (interchain with G-Cter in SUMO2)). Phosphoserine occurs at positions 274 and 277. A zinc ribbon region spans residues 290 to 332; that stretch reads GALLPCKECSGQLVFKSDAYYCTGDVTAWTKCMVKTQTPSRKE. Zn(2+) contacts are provided by C295, C298, C311, and C321. The segment at 357-383 is disordered; the sequence is FPPETSAPAPPHLPPSVTSAPTAVNSS. Positions 372-383 are enriched in polar residues; sequence SVTSAPTAVNSS. Residues 373 to 523 are automodification domain; the sequence is VTSAPTAVNS…GVNKSEKRMK (151 aa). One can recognise a BRCT domain in the interval 385-476; it reads PADKPLSNMK…KSLQELLSAH (92 aa). D387 carries the polyADP-ribosyl aspartic acid modification. A polyADP-ribosyl glutamic acid mark is found at E407, E413, E435, E437, E444, E445, and E456. K467 participates in a covalent cross-link: Glycyl lysine isopeptide (Lys-Gly) (interchain with G-Cter in SUMO2). PolyADP-ribosyl glutamic acid occurs at positions 471 and 484. K486 participates in a covalent cross-link: Glycyl lysine isopeptide (Lys-Gly) (interchain with G-Cter in SUMO1); alternate. A Glycyl lysine isopeptide (Lys-Gly) (interchain with G-Cter in SUMO2); alternate cross-link involves residue K486. 2 positions are modified to polyADP-ribosyl glutamic acid: E488 and E491. The disordered stretch occupies residues 495 to 516; sequence PKGKSAAPSKKSKGLYKEEGVN. Residues S499, S503, and S506 each carry the ADP-ribosylserine modification. K511 is covalently cross-linked (Glycyl lysine isopeptide (Lys-Gly) (interchain with G-Cter in SUMO2)). PolyADP-ribosyl glutamic acid is present on residues E512 and E513. S518 bears the ADP-ribosylserine mark. At E519 the chain carries PolyADP-ribosyl glutamic acid. The residue at position 520 (K520) is an N6-(ADP-ribosyl)lysine. K527 is covalently cross-linked (Glycyl lysine isopeptide (Lys-Gly) (interchain with G-Cter in SUMO2)). The WGR domain occupies 541–637; that stretch reads SAHVLEKGGK…KNFTKYPKKF (97 aa). Phosphothreonine is present on T593. N6-acetyllysine occurs at positions 599 and 620. The PARP alpha-helical domain occupies 661 to 778; it reads KSKLPKAVQE…DIEVAYSLLR (118 aa). A Glycyl lysine isopeptide (Lys-Gly) (interchain with G-Cter in SUMO1); alternate cross-link involves residue K747. A Glycyl lysine isopeptide (Lys-Gly) (interchain with G-Cter in SUMO2); alternate cross-link involves residue K747. Residues S781 and S785 each carry the phosphoserine modification. Residues 787-1013 form the PARP catalytic domain; that stretch reads DPIDVNYEKL…LKFNFKTSLW (227 aa). NAD(+) is bound by residues 861–863, G870, R877, and S903; that span reads HGS. The active-site For poly [ADP-ribose] polymerase activity is the E987.

The protein belongs to the ARTD/PARP family. In terms of assembly, homodimer; PARP-type zinc-fingers from separate PARP1 molecules form a dimer module that specifically recognizes DNA strand breaks. Heterodimer; heterodimerizes with PARP2. Interacts (via the PARP catalytic domain) with HPF1. Interacts with NMNAT1. Interacts with nucleosomes; with a preference for nucleosomes containing H2A.X. Interacts with APTX. Component of a base excision repair (BER) complex, containing at least XRCC1, PARP1, PARP2, POLB and LRIG3. Interacts with SRY. The SWAP complex consists of NPM1, NCL, PARP1 and SWAP70. Interacts with TIAM2. Interacts with PARP3; leading to activate PARP1 in absence of DNA. Interacts (when poly-ADP-ribosylated) with CHD1L (via macro domain). Interacts with the DNA polymerase alpha catalytic subunit POLA1; this interaction functions as part of the control of replication fork progression. Interacts with EEF1A1 and TXK. Interacts with RNF4. Interacts with RNF146. Interacts with ZNF423. Interacts with APLF. Interacts with SNAI1 (via zinc fingers); the interaction requires SNAI1 to be poly-ADP-ribosylated and non-phosphorylated (active) by GSK3B. Interacts (when poly-ADP-ribosylated) with PARP9. Interacts with NR4A3; activates PARP1 by improving acetylation of PARP1 and suppressing the interaction between PARP1 and SIRT1. Interacts (via catalytic domain) with PUM3; the interaction inhibits the poly-ADP-ribosylation activity of PARP1 and the degradation of PARP1 by CASP3 following genotoxic stress. Interacts with ZNF365. Interacts with RRP1B. Interacts with TIMELESS; the interaction is direct. Interacts with CGAS; leading to impede the formation of the PARP1-TIMELESS complex. Interacts with KHDC3L, the interaction is increased following the formation of DNA double-strand breaks. Interacts (when auto-poly-ADP-ribosylated) with XRCC1; leading to inhibit PARP1 ADP-ribosyltransferase activity. Interacts with SPINDOC; promoting PARP1 ADP-ribosyltransferase activity. Interacts with BANF1; leading to inhibit PARP1 ADP-ribosyltransferase activity in response to oxidative DNA damage. Interacts (when sumoylated and ubiquitinated) with VCP/p97; leading to its extraction from chromatin. Interacts with YARS1; promoting PARP1 ADP-ribosyltransferase activity. Interacts with PACMP micropeptide; Interacts with PACMP micropeptide; interaction. Interacts (when poly-ADP-ribosylated) with isoform 1 of MACROH2A1; MACROH2A1 specifically binds to poly-ADP-ribose chains and inhibits PARP1 activity, limiting the consumption of nuclear NAD(+). Interacts with CARM1; promoting recruitment to replication forks. Interacts with RECQL. Interacts with ZNF32; the interaction reshapes ZNF432 interacting proteins. Interacts with TPRN; TPRN interacts with a number of DNA damage response proteins, is recruited to sites of DNA damage and may play a role in DNA damage repair. As to quaternary structure, interacts (when auto-poly-ADP-ribosylated) with AIFM1. Poly-ADP-ribosylated on serine, glutamate and aspartate residues by autocatalysis. Auto-ADP-ribosylation on serine takes place following interaction with HPF1. Auto poly-ADP-ribosylation on serine residues promotes its dissociation from chromatin. Poly-ADP-ribosylated by PARP2; poly-ADP-ribosylation mediates the recruitment of CHD1L to DNA damage sites. Mono-ADP-ribosylated at Lys-520 by SIRT6 in response to oxidative stress, promoting recruitment to double-strand breaks (DSBs) sites. Post-translationally, S-nitrosylated, leading to inhibit transcription regulation activity. In terms of processing, phosphorylated at Thr-593 by PRKDC in response to DNA damage following virus infection, promoting its translocation to the cytosol. Phosphorylated by TXK. Proteolytically cleaved by caspase-3 (CASP3) and caspase-7 (CASP7) in response to apoptosis to generate the Poly [ADP-ribose] polymerase 1, processed N-terminus and Poly [ADP-ribose] polymerase 1, processed C-terminus forms. Post-translationally, sumoylated with SUMO1 or SUMO2 by PIAS4 following prolonged residence (trapping) to chromatin. Sumoylation promotes ubiquitination by RNF4 and removal from chromatin by VCP/p97. In terms of processing, ubiquitinated by RNF4 following sumoylation by PIAS4 in response to prolonged residence (trapping) to chromatin. Ubiquitination promotes removal from chromatin by VCP/p97.

The protein localises to the chromosome. It is found in the nucleus. The protein resides in the nucleolus. It localises to the cytoplasm. Its subcellular location is the cytosol. It carries out the reaction NAD(+) + (ADP-D-ribosyl)n-acceptor = nicotinamide + (ADP-D-ribosyl)n+1-acceptor + H(+).. The catalysed reaction is L-seryl-[protein] + NAD(+) = O-(ADP-D-ribosyl)-L-seryl-[protein] + nicotinamide + H(+). The enzyme catalyses L-aspartyl-[protein] + NAD(+) = 4-O-(ADP-D-ribosyl)-L-aspartyl-[protein] + nicotinamide. It catalyses the reaction L-glutamyl-[protein] + NAD(+) = 5-O-(ADP-D-ribosyl)-L-glutamyl-[protein] + nicotinamide. It carries out the reaction L-tyrosyl-[protein] + NAD(+) = O-(ADP-D-ribosyl)-L-tyrosyl-[protein] + nicotinamide + H(+). The catalysed reaction is L-histidyl-[protein] + NAD(+) = N(tele)-(ADP-D-ribosyl)-L-histidyl-[protein] + nicotinamide + H(+). Its activity is regulated as follows. ADP-ribosyltransferase activity is regulated via an allosteric activation mechanism. In absence of activation signal, PARP1 is autoinhibited by the PARP alpha-helical domain (also named HD region), which prevents effective NAD(+)-binding. Activity is highly stimulated by signals, such as DNA strand breaks. Binding to damaged DNA unfolds the PARP alpha-helical domain, relieving autoinhibition. Poly-ADP-ribosyltransferase activity is tightly regulated and PARP1 is removed from damaged chromatin following initial poly-ADP-ribosylation of chromatin to avoid prolonged residence (trapping) that has cytotoxic consequences. A number of factors (VCP/p97) or post-translational modifications (auto-poly-ADP-ribosylation or ubiquitination) promote PARP1 removal from chromatin. In terms of biological role, poly-ADP-ribosyltransferase that mediates poly-ADP-ribosylation of proteins and plays a key role in DNA repair. Mediates glutamate, aspartate, serine, histidine or tyrosine ADP-ribosylation of proteins: the ADP-D-ribosyl group of NAD(+) is transferred to the acceptor carboxyl group of target residues and further ADP-ribosyl groups are transferred to the 2'-position of the terminal adenosine moiety, building up a polymer with an average chain length of 20-30 units. Serine ADP-ribosylation of proteins constitutes the primary form of ADP-ribosylation of proteins in response to DNA damage. Specificity for the different amino acids is conferred by interacting factors, such as HPF1 and NMNAT1. Following interaction with HPF1, catalyzes serine ADP-ribosylation of target proteins; HPF1 confers serine specificity by completing the PARP1 active site. Also catalyzes tyrosine ADP-ribosylation of target proteins following interaction with HPF1. Following interaction with NMNAT1, catalyzes glutamate and aspartate ADP-ribosylation of target proteins; NMNAT1 confers glutamate and aspartate specificity. PARP1 initiates the repair of DNA breaks: recognizes and binds DNA breaks within chromatin and recruits HPF1, licensing serine ADP-ribosylation of target proteins, such as histones (H2BS6ADPr and H3S10ADPr), thereby promoting decompaction of chromatin and the recruitment of repair factors leading to the reparation of DNA strand breaks. HPF1 initiates serine ADP-ribosylation but restricts the polymerase activity of PARP1 in order to limit the length of poly-ADP-ribose chains. In addition to base excision repair (BER) pathway, also involved in double-strand breaks (DSBs) repair: together with TIMELESS, accumulates at DNA damage sites and promotes homologous recombination repair by mediating poly-ADP-ribosylation. Mediates the poly-ADP-ribosylation of a number of proteins, including itself, APLF, CHFR and NFAT5. In addition to proteins, also able to ADP-ribosylate DNA: catalyzes ADP-ribosylation of DNA strand break termini containing terminal phosphates and a 2'-OH group in single- and double-stranded DNA, respectively. Required for PARP9 and DTX3L recruitment to DNA damage sites. PARP1-dependent PARP9-DTX3L-mediated ubiquitination promotes the rapid and specific recruitment of 53BP1/TP53BP1, UIMC1/RAP80, and BRCA1 to DNA damage sites. PARP1-mediated DNA repair in neurons plays a role in sleep: senses DNA damage in neurons and promotes sleep, facilitating efficient DNA repair. In addition to DNA repair, also involved in other processes, such as transcription regulation, programmed cell death, membrane repair, adipogenesis and innate immunity. Acts as a repressor of transcription: binds to nucleosomes and modulates chromatin structure in a manner similar to histone H1, thereby altering RNA polymerase II. Acts both as a positive and negative regulator of transcription elongation, depending on the context. Acts as a positive regulator of transcription elongation by mediating poly-ADP-ribosylation of NELFE, preventing RNA-binding activity of NELFE and relieving transcription pausing. Acts as a negative regulator of transcription elongation in response to DNA damage by catalyzing poly-ADP-ribosylation of CCNT1, disrupting the phase separation activity of CCNT1 and subsequent activation of CDK9. Involved in replication fork progression following interaction with CARM1: mediates poly-ADP-ribosylation at replication forks, slowing fork progression. Poly-ADP-ribose chains generated by PARP1 also play a role in poly-ADP-ribose-dependent cell death, a process named parthanatos. Also acts as a negative regulator of the cGAS-STING pathway. Acts by mediating poly-ADP-ribosylation of CGAS: PARP1 translocates into the cytosol following phosphorylation by PRKDC and catalyzes poly-ADP-ribosylation and inactivation of CGAS. Acts as a negative regulator of adipogenesis: catalyzes poly-ADP-ribosylation of histone H2B on 'Glu-35' (H2BE35ADPr) following interaction with NMNAT1, inhibiting phosphorylation of H2B at 'Ser-36' (H2BS36ph), thereby blocking expression of pro-adipogenetic genes. Involved in the synthesis of ATP in the nucleus, together with NMNAT1, PARG and NUDT5. Nuclear ATP generation is required for extensive chromatin remodeling events that are energy-consuming. Functionally, promotes AIFM1-mediated apoptosis. This form, which translocates into the cytoplasm following cleavage by caspase-3 (CASP3) and caspase-7 (CASP7) in response to apoptosis, is auto-poly-ADP-ribosylated and serves as a poly-ADP-ribose carrier to induce AIFM1-mediated apoptosis. Its function is as follows. This cleavage form irreversibly binds to DNA breaks and interferes with DNA repair, promoting DNA damage-induced apoptosis. In Cricetulus griseus (Chinese hamster), this protein is Poly [ADP-ribose] polymerase 1 (PARP1).